We begin with the raw amino-acid sequence, 1077 residues long: Serine/threonine-protein kinase sel-5 (1077 aa).

One can recognise a Protein kinase domain in the interval 47-317; that stretch reads VTIEKQIAEG…IYQTSVLAFE (271 aa). Residues 53–61 and lysine 75 each bind ATP; that span reads IAEGGFAIV. Aspartate 178 (proton acceptor) is an active-site residue. Disordered regions lie at residues 347-444, 488-554, 616-813, and 920-1077; these read MRDG…TDGS, GFTD…SQVV, ELDS…TNPF, and LISV…PTDL. Positions 369–399 are enriched in polar residues; sequence IQSSSKMASLSQQVPSISNISMPSGSGTVET. Positions 491–515 are enriched in basic and acidic residues; the sequence is DLDKPALPRDRAQTDGKRRLPHESD. Residues 541–554 show a composition bias toward low complexity; sequence SSQQTTSKTSSQVV. Over residues 638–648 the composition is skewed to polar residues; it reads LTVSTSSSAQP. Over residues 655–679 the composition is skewed to acidic residues; the sequence is TDEDDERQLLSETDEEEKYEIDEKE. Basic and acidic residues-rich tracts occupy residues 697-708 and 739-751; these read DEQRMNDRRRYS and DSRR…HDED. Residues 770 to 780 show a composition bias toward acidic residues; the sequence is EDDGLEDDDDH. Positions 799–810 are enriched in polar residues; it reads GTSTPHTQNPIT. Pro residues predominate over residues 927–936; it reads TDPPPPPLPK. A compositionally biased stretch (polar residues) spans 941–950; that stretch reads ASPTQETTAT. Positions 960-969 are enriched in basic residues; it reads KLLKKEKKKE. Basic and acidic residues predominate over residues 970 to 989; that stretch reads KKDGKKDKLKLEEYREKGSS. Residues 1054–1067 show a composition bias toward polar residues; that stretch reads LTGKNASFVNTSFQ.

This sequence belongs to the protein kinase superfamily. Ser/Thr protein kinase family. Mg(2+) is required as a cofactor.

It localises to the cytoplasm. The catalysed reaction is L-seryl-[protein] + ATP = O-phospho-L-seryl-[protein] + ADP + H(+). It catalyses the reaction L-threonyl-[protein] + ATP = O-phospho-L-threonyl-[protein] + ADP + H(+). Serine/threonine-protein kinase which may play a role in lin-12-mediated cell-fate decisions. This is Serine/threonine-protein kinase sel-5 from Caenorhabditis elegans.